A 614-amino-acid polypeptide reads, in one-letter code: Syringomycin synthase SyrB1 (614 aa).

The 76-residue stretch at 535-610 (KGLSEQEHFV…VLADHITRSL (76 aa)) folds into the Carrier domain. Serine 570 is subject to O-(pantetheine 4'-phosphoryl)serine.

Belongs to the ATP-dependent AMP-binding enzyme family. It depends on pantetheine 4'-phosphate as a cofactor.

The catalysed reaction is holo-[peptidyl-carrier protein] + L-threonine + ATP = L-threonyl-[peptidyl-carrier protein] + AMP + diphosphate. Involved in the biosynthesis of syringomycin E, a cyclic lipodepsinonapeptide toxin with phytotoxic activity. Specifically adenylates L-threonine and loads it onto its peptidyl carrier domain, via a thioester linkage to the phosphopanthetheine moiety. Is highly specific for L-threonine. The chain is Syringomycin synthase SyrB1 from Pseudomonas syringae pv. syringae.